Reading from the N-terminus, the 203-residue chain is A-type ATP synthase subunit E (203 aa).

The protein belongs to the V-ATPase E subunit family. In terms of assembly, has multiple subunits with at least A(3), B(3), C, D, E, F, H, I and proteolipid K(x).

The protein localises to the cell membrane. Functionally, component of the A-type ATP synthase that produces ATP from ADP in the presence of a proton gradient across the membrane. This is A-type ATP synthase subunit E from Thermococcus kodakarensis (strain ATCC BAA-918 / JCM 12380 / KOD1) (Pyrococcus kodakaraensis (strain KOD1)).